The chain runs to 242 residues: Triosephosphate isomerase (242 aa).

9–11 (NWK) lines the substrate pocket. His90 (electrophile) is an active-site residue. Catalysis depends on Glu162, which acts as the Proton acceptor. Residues Gly168, Ser205, and 226-227 (GG) each bind substrate.

This sequence belongs to the triosephosphate isomerase family. As to quaternary structure, homodimer.

It localises to the cytoplasm. The catalysed reaction is D-glyceraldehyde 3-phosphate = dihydroxyacetone phosphate. It functions in the pathway carbohydrate biosynthesis; gluconeogenesis. Its pathway is carbohydrate degradation; glycolysis; D-glyceraldehyde 3-phosphate from glycerone phosphate: step 1/1. In terms of biological role, involved in the gluconeogenesis. Catalyzes stereospecifically the conversion of dihydroxyacetone phosphate (DHAP) to D-glyceraldehyde-3-phosphate (G3P). The polypeptide is Triosephosphate isomerase (Azoarcus sp. (strain BH72)).